Here is a 185-residue protein sequence, read N- to C-terminus: Hypoxanthine/guanine phosphoribosyltransferase (185 aa).

The protein belongs to the purine/pyrimidine phosphoribosyltransferase family. Archaeal HPRT subfamily. In terms of assembly, homodimer.

It localises to the cytoplasm. The catalysed reaction is IMP + diphosphate = hypoxanthine + 5-phospho-alpha-D-ribose 1-diphosphate. It catalyses the reaction GMP + diphosphate = guanine + 5-phospho-alpha-D-ribose 1-diphosphate. It participates in purine metabolism; IMP biosynthesis via salvage pathway; IMP from hypoxanthine: step 1/1. In terms of biological role, catalyzes a salvage reaction resulting in the formation of IMP that is energically less costly than de novo synthesis. This Methanococcus maripaludis (strain C5 / ATCC BAA-1333) protein is Hypoxanthine/guanine phosphoribosyltransferase.